We begin with the raw amino-acid sequence, 372 residues long: Aminomethyltransferase (372 aa).

The protein belongs to the GcvT family. The glycine cleavage system is composed of four proteins: P, T, L and H.

It carries out the reaction N(6)-[(R)-S(8)-aminomethyldihydrolipoyl]-L-lysyl-[protein] + (6S)-5,6,7,8-tetrahydrofolate = N(6)-[(R)-dihydrolipoyl]-L-lysyl-[protein] + (6R)-5,10-methylene-5,6,7,8-tetrahydrofolate + NH4(+). The glycine cleavage system catalyzes the degradation of glycine. The chain is Aminomethyltransferase from Burkholderia orbicola (strain MC0-3).